The primary structure comprises 409 residues: Tyrosine--tRNA ligase (409 aa).

Residue Tyr35 coordinates L-tyrosine. The 'HIGH' region motif lies at 40-49; it reads CTAESLHVGS. Tyr172 and Gln176 together coordinate L-tyrosine. The 'KMSKS' region signature appears at 232–236; the sequence is KMGKT. Lys235 lines the ATP pocket. One can recognise an S4 RNA-binding domain in the interval 343–409; sequence ISILDLVILS…KKKHIKVELI (67 aa).

It belongs to the class-I aminoacyl-tRNA synthetase family. TyrS type 1 subfamily. In terms of assembly, homodimer.

It is found in the cytoplasm. It catalyses the reaction tRNA(Tyr) + L-tyrosine + ATP = L-tyrosyl-tRNA(Tyr) + AMP + diphosphate + H(+). Its function is as follows. Catalyzes the attachment of tyrosine to tRNA(Tyr) in a two-step reaction: tyrosine is first activated by ATP to form Tyr-AMP and then transferred to the acceptor end of tRNA(Tyr). In Pelagibacter ubique (strain HTCC1062), this protein is Tyrosine--tRNA ligase.